Here is a 55-residue protein sequence, read N- to C-terminus: MAKGKRDKIRMVSSAATGHFYTTDKNKKNTPGKMEMMKYDPVVRKHVMYKEGKIK.

Belongs to the bacterial ribosomal protein bL33 family.

The chain is Large ribosomal subunit protein bL33 from Xanthomonas oryzae pv. oryzae (strain PXO99A).